We begin with the raw amino-acid sequence, 372 residues long: tRNA pseudouridine synthase D (372 aa).

Asp85 serves as the catalytic Nucleophile. The TRUD domain maps to 160-330; it reads GFTNYFGYQR…MQGSRRFMWG (171 aa).

Belongs to the pseudouridine synthase TruD family.

The enzyme catalyses uridine(13) in tRNA = pseudouridine(13) in tRNA. In terms of biological role, responsible for synthesis of pseudouridine from uracil-13 in transfer RNAs. The polypeptide is tRNA pseudouridine synthase D (Campylobacter jejuni (strain RM1221)).